We begin with the raw amino-acid sequence, 220 residues long: 7-cyano-7-deazaguanine synthase (220 aa).

Residue phenylalanine 10–leucine 20 participates in ATP binding. Zn(2+) is bound by residues cysteine 186, cysteine 195, cysteine 198, and cysteine 201.

It belongs to the QueC family. In terms of assembly, homodimer. It depends on Zn(2+) as a cofactor.

The enzyme catalyses 7-carboxy-7-deazaguanine + NH4(+) + ATP = 7-cyano-7-deazaguanine + ADP + phosphate + H2O + H(+). It participates in purine metabolism; 7-cyano-7-deazaguanine biosynthesis. Functionally, catalyzes the ATP-dependent conversion of 7-carboxy-7-deazaguanine (CDG) to 7-cyano-7-deazaguanine (preQ(0)). This chain is 7-cyano-7-deazaguanine synthase, found in Bacillus cereus (strain G9842).